Consider the following 371-residue polypeptide: Cell division control protein 3 (371 aa).

Residues 22-307 (AGIDFNIMTV…DEYKTREIGL (286 aa)) form the Septin-type G domain. Positions 32–39 (GSNGLGKS) are G1 motif. GTP contacts are provided by residues 32-39 (GSNGLGKS), glycine 116, 195-203 (KSDLLSDSE), and arginine 257. The interval 113–116 (EVDG) is G3 motif. Residues 194–197 (GKSD) are G4 motif.

It belongs to the TRAFAC class TrmE-Era-EngA-EngB-Septin-like GTPase superfamily. Septin GTPase family. As to quaternary structure, component of the septin complex.

Its function is as follows. Septins are GTPases involved in cytokinesis. The septins localize to the site of cleavage and act as a structural scaffold that recruits different components involved in diverse processes at specific stages during the cell cycle. Septins are also involved in cell morphogenesis, chitin deposition, cell cycle regulation, cell compartmentalization and spore wall formation. This chain is Cell division control protein 3 (CDC3), found in Encephalitozoon cuniculi (strain GB-M1) (Microsporidian parasite).